A 243-amino-acid polypeptide reads, in one-letter code: ATP synthase subunit b, mitochondrial (243 aa).

It belongs to the eukaryotic ATPase B chain family. F-type ATPases have 2 components, CF(1) - the catalytic core - and CF(0) - the membrane proton channel. CF(1) has five subunits: alpha(3), beta(3), gamma(1), delta(1), epsilon(1). CF(0) has three main subunits: a, b and c.

It is found in the mitochondrion. Its subcellular location is the mitochondrion inner membrane. In terms of biological role, mitochondrial membrane ATP synthase (F(1)F(0) ATP synthase or Complex V) produces ATP from ADP in the presence of a proton gradient across the membrane which is generated by electron transport complexes of the respiratory chain. F-type ATPases consist of two structural domains, F(1) - containing the extramembraneous catalytic core, and F(0) - containing the membrane proton channel, linked together by a central stalk and a peripheral stalk. During catalysis, ATP synthesis in the catalytic domain of F(1) is coupled via a rotary mechanism of the central stalk subunits to proton translocation. Part of the complex F(0) domain and the peripheric stalk, which acts as a stator to hold the catalytic alpha(3)beta(3) subcomplex and subunit a/ATP6 static relative to the rotary elements. The sequence is that of ATP synthase subunit b, mitochondrial from Drosophila melanogaster (Fruit fly).